Reading from the N-terminus, the 199-residue chain is Large ribosomal subunit protein bL25 (199 aa).

Belongs to the bacterial ribosomal protein bL25 family. CTC subfamily. As to quaternary structure, part of the 50S ribosomal subunit; part of the 5S rRNA/L5/L18/L25 subcomplex. Contacts the 5S rRNA. Binds to the 5S rRNA independently of L5 and L18.

This is one of the proteins that binds to the 5S RNA in the ribosome where it forms part of the central protuberance. The sequence is that of Large ribosomal subunit protein bL25 from Pelobacter propionicus (strain DSM 2379 / NBRC 103807 / OttBd1).